The following is a 178-amino-acid chain: Large ribosomal subunit protein uL10 (178 aa).

It belongs to the universal ribosomal protein uL10 family. As to quaternary structure, part of the ribosomal stalk of the 50S ribosomal subunit. The N-terminus interacts with L11 and the large rRNA to form the base of the stalk. The C-terminus forms an elongated spine to which L12 dimers bind in a sequential fashion forming a multimeric L10(L12)X complex.

Functionally, forms part of the ribosomal stalk, playing a central role in the interaction of the ribosome with GTP-bound translation factors. The polypeptide is Large ribosomal subunit protein uL10 (Thermosynechococcus vestitus (strain NIES-2133 / IAM M-273 / BP-1)).